The primary structure comprises 348 residues: Succinylglutamate desuccinylase (348 aa).

Zn(2+) contacts are provided by histidine 64, glutamate 67, and histidine 164. The active site involves glutamate 228.

Belongs to the AspA/AstE family. Succinylglutamate desuccinylase subfamily. Zn(2+) is required as a cofactor.

The catalysed reaction is N-succinyl-L-glutamate + H2O = L-glutamate + succinate. The protein operates within amino-acid degradation; L-arginine degradation via AST pathway; L-glutamate and succinate from L-arginine: step 5/5. In terms of biological role, transforms N(2)-succinylglutamate into succinate and glutamate. The chain is Succinylglutamate desuccinylase from Shewanella amazonensis (strain ATCC BAA-1098 / SB2B).